Consider the following 495-residue polypeptide: MSKLQIIQSKGQYINGEWIKGNGLILESTNPASGTLLWQGNNATDEEIANACYVAHRALKSWANTSFEERARYTKAFVEQVEKNREQLARLISLETGKPLWESQTEVSSVIGKVNLSIQAYQERTWPKQTETAEANACLRFKPHGIVVVLGAFNFPAHLSNGHIVPALLAGNTVLYKPSEHTPAVAELIIQCWHDSGLPPGVINCLQGNANCGNTLLSQDIQGVYFTGSYATGLRIHQQFCNRPEVILALEMGGNNPLVIDEVKDIDAAVYHTILSTMITAGQRCTCARRIIIPDSQTGDLFLERFAKACKLMRIGSFDSQPEPFIGPVISHVQALKHLHAQKQLIEMGGEIILPMSLLLEYTGLVSPGIIDMTRAKNPPDEEIFAPFAQIYRYNHFDEAIQLANQTRYGLSAGLLSDNKDHYQQFYQNIRAGLINWNRPTTGAASSLPFGGVGCSGNHRPSAYFAADYCAYPVASMEQPLLTTPVQRLPGLVLE.

228-233 (GSYATG) provides a ligand contact to NAD(+). Residues glutamate 251 and cysteine 285 contribute to the active site.

Belongs to the aldehyde dehydrogenase family. AstD subfamily.

It catalyses the reaction N-succinyl-L-glutamate 5-semialdehyde + NAD(+) + H2O = N-succinyl-L-glutamate + NADH + 2 H(+). It participates in amino-acid degradation; L-arginine degradation via AST pathway; L-glutamate and succinate from L-arginine: step 4/5. Catalyzes the NAD-dependent reduction of succinylglutamate semialdehyde into succinylglutamate. In Legionella pneumophila (strain Corby), this protein is N-succinylglutamate 5-semialdehyde dehydrogenase.